The primary structure comprises 127 residues: Prophage antitermination protein Q homolog QuuD (127 aa).

It belongs to the phage antitermination Q type 1 family.

Its function is as follows. Positively regulate expression of some phage genes. Bacterial host RNA polymerase modified by antitermination proteins transcribes through termination sites that otherwise prevent expression of the regulated genes. This is Prophage antitermination protein Q homolog QuuD (quuD) from Escherichia coli (strain K12).